A 663-amino-acid polypeptide reads, in one-letter code: UvrABC system protein B (663 aa).

In terms of domain architecture, Helicase ATP-binding spans 27 to 414 (KNIENGVKDQ…SDNHIAEQLI (388 aa)). Residue 40-47 (GVTGSGKT) coordinates ATP. The short motif at 93 to 116 (YYDYYQPEAYIKTTDTYIEKDSSV) is the Beta-hairpin element. Positions 432 to 594 (QVDDLLDEIR…IDPKSIIKEI (163 aa)) constitute a Helicase C-terminal domain. Residues 624–659 (EKEITKLEKKIKKLVEELDFEQAIILRDEMLKLKEL) form the UVR domain.

Belongs to the UvrB family. Forms a heterotetramer with UvrA during the search for lesions. Interacts with UvrC in an incision complex.

The protein localises to the cytoplasm. Its function is as follows. The UvrABC repair system catalyzes the recognition and processing of DNA lesions. A damage recognition complex composed of 2 UvrA and 2 UvrB subunits scans DNA for abnormalities. Upon binding of the UvrA(2)B(2) complex to a putative damaged site, the DNA wraps around one UvrB monomer. DNA wrap is dependent on ATP binding by UvrB and probably causes local melting of the DNA helix, facilitating insertion of UvrB beta-hairpin between the DNA strands. Then UvrB probes one DNA strand for the presence of a lesion. If a lesion is found the UvrA subunits dissociate and the UvrB-DNA preincision complex is formed. This complex is subsequently bound by UvrC and the second UvrB is released. If no lesion is found, the DNA wraps around the other UvrB subunit that will check the other stand for damage. In Fusobacterium nucleatum subsp. nucleatum (strain ATCC 25586 / DSM 15643 / BCRC 10681 / CIP 101130 / JCM 8532 / KCTC 2640 / LMG 13131 / VPI 4355), this protein is UvrABC system protein B.